The following is an 88-amino-acid chain: Fe-S protein maturation auxiliary factor SufT (88 aa).

The protein belongs to the MIP18 family.

Functionally, involved in the maturation of iron-sulfur (Fe-S) proteins. May function as a Fe-S cluster carrier. Is required for S.aureus growth under conditions that impose a high demand for lipoic acid, likely via a role in the maturation of the lipoate synthase LipA. Is non-essential for growth in conditions that impose a low demand for lipoic acid or Fe-S clusters, such as fermentative growth. Also seems to be involved in the maturation of AcnA, LeuCD and IlvD proteins, that utilize Fe-S cluster cofactors, and its role increases under conditions of high-demand for Fe-S clusters (respiratory growth). Is not involved in the repair of Fe-S clusters damaged by reactive oxygen species or in the physical protection of Fe-S clusters from oxidants. Displays synergy with the Fe-S cluster carrier Nfu. This chain is Fe-S protein maturation auxiliary factor SufT, found in Staphylococcus aureus (strain USA300).